The sequence spans 296 residues: Polyamine aminopropyltransferase (296 aa).

A PABS domain is found at 5–238 (ELWYETLHAN…GIMTFAWATQ (234 aa)). Residue glutamine 33 coordinates S-methyl-5'-thioadenosine. Residues histidine 64 and aspartate 88 each contribute to the spermidine site. S-methyl-5'-thioadenosine is bound by residues glutamate 108 and 140–141 (DG). Aspartate 158 acts as the Proton acceptor in catalysis. 158–161 (DCTD) contributes to the spermidine binding site. Proline 165 contributes to the S-methyl-5'-thioadenosine binding site.

It belongs to the spermidine/spermine synthase family. In terms of assembly, homodimer or homotetramer.

The protein resides in the cytoplasm. The catalysed reaction is S-adenosyl 3-(methylsulfanyl)propylamine + putrescine = S-methyl-5'-thioadenosine + spermidine + H(+). Its pathway is amine and polyamine biosynthesis; spermidine biosynthesis; spermidine from putrescine: step 1/1. Catalyzes the irreversible transfer of a propylamine group from the amino donor S-adenosylmethioninamine (decarboxy-AdoMet) to putrescine (1,4-diaminobutane) to yield spermidine. This is Polyamine aminopropyltransferase from Yersinia pseudotuberculosis serotype O:3 (strain YPIII).